The chain runs to 338 residues: S-adenosylmethionine:tRNA ribosyltransferase-isomerase (338 aa).

It belongs to the QueA family. In terms of assembly, monomer.

The protein resides in the cytoplasm. It carries out the reaction 7-aminomethyl-7-carbaguanosine(34) in tRNA + S-adenosyl-L-methionine = epoxyqueuosine(34) in tRNA + adenine + L-methionine + 2 H(+). The protein operates within tRNA modification; tRNA-queuosine biosynthesis. Transfers and isomerizes the ribose moiety from AdoMet to the 7-aminomethyl group of 7-deazaguanine (preQ1-tRNA) to give epoxyqueuosine (oQ-tRNA). The protein is S-adenosylmethionine:tRNA ribosyltransferase-isomerase of Francisella tularensis subsp. tularensis (strain WY96-3418).